A 713-amino-acid polypeptide reads, in one-letter code: Subtilisin-like protease SBT4.9 (713 aa).

A signal peptide spans 1 to 24 (MARRADSFCLISCVLVSFVISVSA). Positions 25-113 (VTDDSQDKQV…VFPDINYKLQ (89 aa)) are cleaved as a propeptide — activation peptide. The 79-residue stretch at 34-112 (VYVVYMGSLP…SVFPDINYKL (79 aa)) folds into the Inhibitor I9 domain. The Peptidase S8 domain maps to 117 to 560 (SWDFLGLKEG…AGHVDPIAAI (444 aa)). Asp-145 functions as the Charge relay system in the catalytic mechanism. N-linked (GlcNAc...) asparagine glycosylation occurs at Asn-176. Residue His-200 is the Charge relay system of the active site. N-linked (GlcNAc...) asparagine glycosylation is found at Asn-215 and Asn-223. Residues 356–415 (NYPLYGGSTDGPLLRGKILVSEDKVSSEIVVANINENYHDYAYVSILPSSALSKDDFDSV) form the PA domain. An N-linked (GlcNAc...) asparagine glycan is attached at Asn-420. The Charge relay system role is filled by Ser-499. Residues Asn-536, Asn-583, Asn-627, and Asn-637 are each glycosylated (N-linked (GlcNAc...) asparagine).

This sequence belongs to the peptidase S8 family. Post-translationally, the C-terminal propeptide is autocleaved.

The protein localises to the secreted. The sequence is that of Subtilisin-like protease SBT4.9 from Arabidopsis thaliana (Mouse-ear cress).